Reading from the N-terminus, the 177-residue chain is Large ribosomal subunit protein uL6 (177 aa).

This sequence belongs to the universal ribosomal protein uL6 family. Part of the 50S ribosomal subunit.

Functionally, this protein binds to the 23S rRNA, and is important in its secondary structure. It is located near the subunit interface in the base of the L7/L12 stalk, and near the tRNA binding site of the peptidyltransferase center. In Methanococcoides burtonii (strain DSM 6242 / NBRC 107633 / OCM 468 / ACE-M), this protein is Large ribosomal subunit protein uL6.